The following is a 391-amino-acid chain: Processive diacylglycerol beta-glucosyltransferase (391 aa).

Belongs to the glycosyltransferase 28 family. UgtP subfamily.

The protein localises to the cell membrane. The catalysed reaction is a 1,2-diacyl-3-O-(beta-D-glucopyranosyl)-sn-glycerol + UDP-alpha-D-glucose = a 1,2-diacyl-3-O-(beta-D-Glc-(1-&gt;6)-beta-D-Glc)-sn-glycerol + UDP + H(+). It catalyses the reaction a 1,2-diacyl-sn-glycerol + UDP-alpha-D-glucose = a 1,2-diacyl-3-O-(beta-D-glucopyranosyl)-sn-glycerol + UDP + H(+). Its pathway is glycolipid metabolism; diglucosyl-diacylglycerol biosynthesis. Processive glucosyltransferase involved in the biosynthesis of both the bilayer- and non-bilayer-forming membrane glucolipids. Is able to successively transfer two glucosyl residues to diacylglycerol (DAG), thereby catalyzing the formation of beta-monoglucosyl-DAG (3-O-(beta-D-glucopyranosyl)-1,2-diacyl-sn-glycerol) and beta-diglucosyl-DAG (3-O-(beta-D-glucopyranosyl-beta-(1-&gt;6)-D-glucopyranosyl)-1,2-diacyl-sn-glycerol). Beta-diglucosyl-DAG is the predominant glycolipid found in Bacillales and is also used as a membrane anchor for lipoteichoic acid (LTA). The polypeptide is Processive diacylglycerol beta-glucosyltransferase (Staphylococcus epidermidis (strain ATCC 12228 / FDA PCI 1200)).